Reading from the N-terminus, the 545-residue chain is Protein FAR1-RELATED SEQUENCE 9 (545 aa).

Residues 22–65 (LNYLKRRQLENPGFLYAIEDDCGNVFWADPTCRLNYTYFGDTLV) enclose the FAR1 domain. In terms of domain architecture, MULE spans 66 to 150 (FDTTYRRGKR…RVFSQTRLRF (85 aa)). The SWIM-type zinc-finger motif lies at 345–381 (HTVSFDSLEVKANCSCQMFEYSGIICRHILAVFSAKN). The interval 460–495 (SNRTPGTRLPNGEAYPSEEARETANATNHPGGEKER) is disordered. Positions 492–545 (EKERTILELTAELERTGQRCEVYRANLLSILRDMEEQKFQLSLKVQNARLSLKE) form a coiled coil.

The protein belongs to the FHY3/FAR1 family. In terms of tissue distribution, expressed in hypocotyls, rosette and cauline leaves, inflorescences stems, flowers and siliques.

Its subcellular location is the nucleus. Its function is as follows. Putative transcription activator involved in regulating light control of development. May act as a negative regulator specific to phyB signaling. This is Protein FAR1-RELATED SEQUENCE 9 (FRS9) from Arabidopsis thaliana (Mouse-ear cress).